We begin with the raw amino-acid sequence, 238 residues long: Monocyte to macrophage differentiation factor (238 aa).

At methionine 1 to histidine 28 the chain is on the cytoplasmic side. A helical transmembrane segment spans residues alanine 29 to leucine 49. Over histidine 50 to threonine 61 the chain is Lumenal. The helical transmembrane segment at alanine 62 to valine 82 threads the bilayer. Topologically, residues serine 83 to arginine 101 are cytoplasmic. A helical transmembrane segment spans residues methionine 102–glycine 122. A topological domain (lumenal) is located at residue proline 123. Residues leucine 124 to phenylalanine 144 traverse the membrane as a helical segment. The Cytoplasmic portion of the chain corresponds to leucine 145–lysine 151. The chain crosses the membrane as a helical span at residues valine 152–methionine 172. Over asparagine 173–asparagine 174 the chain is Lumenal. A helical membrane pass occupies residues threonine 175–phenylalanine 195. The Cytoplasmic segment spans residues lysine 196–aspartate 198. Residues glycine 199–histidine 219 traverse the membrane as a helical segment. Topologically, residues tyrosine 220–leucine 238 are lumenal.

It belongs to the ADIPOR family. As to expression, preferentially expressed in the brain.

The protein resides in the late endosome membrane. The protein localises to the lysosome membrane. In terms of biological role, is involved in the dynamics of lysosomal membranes associated with microglial activation following brain lesion. In Rattus norvegicus (Rat), this protein is Monocyte to macrophage differentiation factor.